The following is a 151-amino-acid chain: UPF0178 protein YaiI (151 aa).

The protein belongs to the UPF0178 family.

The polypeptide is UPF0178 protein YaiI (Salmonella paratyphi C (strain RKS4594)).